We begin with the raw amino-acid sequence, 296 residues long: Ribosomal RNA small subunit methyltransferase J (296 aa).

D205 serves as a coordination point for S-adenosyl-L-methionine.

This sequence belongs to the methyltransferase superfamily. RsmJ family.

The protein localises to the cytoplasm. The catalysed reaction is guanosine(1516) in 16S rRNA + S-adenosyl-L-methionine = N(2)-methylguanosine(1516) in 16S rRNA + S-adenosyl-L-homocysteine + H(+). Its function is as follows. Specifically methylates the guanosine in position 1516 of 16S rRNA. The protein is Ribosomal RNA small subunit methyltransferase J of Psychrobacter arcticus (strain DSM 17307 / VKM B-2377 / 273-4).